Reading from the N-terminus, the 25-residue chain is Ranatuerin-1C (25 aa).

An intrachain disulfide couples Cys19 to Cys25.

As to expression, expressed by the skin glands.

The protein resides in the secreted. Functionally, antibacterial activity against Gram-positive bacterium S.aureus (MIC=55 uM) and Gram-negative bacterium E.coli (MIC=1.5 uM). Has activity against C.albicans (MIC=58 uM). In Lithobates clamitans (Green frog), this protein is Ranatuerin-1C.